Consider the following 216-residue polypeptide: Peptide deformylase (216 aa).

Positions 134 and 178 each coordinate Fe cation. Glu-179 is an active-site residue. His-182 contacts Fe cation.

This sequence belongs to the polypeptide deformylase family. Fe(2+) is required as a cofactor.

It catalyses the reaction N-terminal N-formyl-L-methionyl-[peptide] + H2O = N-terminal L-methionyl-[peptide] + formate. Its function is as follows. Removes the formyl group from the N-terminal Met of newly synthesized proteins. Requires at least a dipeptide for an efficient rate of reaction. N-terminal L-methionine is a prerequisite for activity but the enzyme has broad specificity at other positions. This Mycoplasma pneumoniae (strain ATCC 29342 / M129 / Subtype 1) (Mycoplasmoides pneumoniae) protein is Peptide deformylase.